Here is a 215-residue protein sequence, read N- to C-terminus: Small ribosomal subunit protein eS1 (215 aa).

The interval Ser195 to Asn215 is disordered.

Belongs to the eukaryotic ribosomal protein eS1 family.

The sequence is that of Small ribosomal subunit protein eS1 from Thermoplasma acidophilum (strain ATCC 25905 / DSM 1728 / JCM 9062 / NBRC 15155 / AMRC-C165).